The primary structure comprises 278 residues: MLINDVNKVKVGNIVFGGKKRFVLIAGPCVMESQELMDEVAGGIKEICDRLGIEYIFKASFDKANRSSIYSYRGPGLEEGMKMLTKIKEKFNVPVITDVHEAWQCKEVAKVADILQIPAFLCRQTDLLIAAAETGKAVNIKKGQFLAPWDMKNIVVKMEESRNKNIMLCERGSTFGYNNMVVDMRSLLEMRKFNYPVIFDVTHSVQKPGGLGTATSGDREYVYPLLRAGLAIGVDAIFAEVHPNPAEAKSDGPNMLYLKDLEEILKIAIEIDKIVKGV.

It belongs to the KdsA family.

The protein resides in the cytoplasm. The enzyme catalyses D-arabinose 5-phosphate + phosphoenolpyruvate + H2O = 3-deoxy-alpha-D-manno-2-octulosonate-8-phosphate + phosphate. It functions in the pathway carbohydrate biosynthesis; 3-deoxy-D-manno-octulosonate biosynthesis; 3-deoxy-D-manno-octulosonate from D-ribulose 5-phosphate: step 2/3. It participates in bacterial outer membrane biogenesis; lipopolysaccharide biosynthesis. This is 2-dehydro-3-deoxyphosphooctonate aldolase from Fusobacterium nucleatum subsp. nucleatum (strain ATCC 25586 / DSM 15643 / BCRC 10681 / CIP 101130 / JCM 8532 / KCTC 2640 / LMG 13131 / VPI 4355).